A 108-amino-acid polypeptide reads, in one-letter code: Large ribosomal subunit protein bL21 (108 aa).

The protein belongs to the bacterial ribosomal protein bL21 family. Part of the 50S ribosomal subunit. Contacts protein L20.

In terms of biological role, this protein binds to 23S rRNA in the presence of protein L20. This is Large ribosomal subunit protein bL21 from Orientia tsutsugamushi (strain Ikeda) (Rickettsia tsutsugamushi).